The primary structure comprises 566 residues: Arginine--tRNA ligase (566 aa).

Residues 121–131 carry the 'HIGH' region motif; that stretch reads ANPNGPFHIGH.

This sequence belongs to the class-I aminoacyl-tRNA synthetase family.

The protein localises to the cytoplasm. It catalyses the reaction tRNA(Arg) + L-arginine + ATP = L-arginyl-tRNA(Arg) + AMP + diphosphate. The chain is Arginine--tRNA ligase from Methanococcus maripaludis (strain C7 / ATCC BAA-1331).